We begin with the raw amino-acid sequence, 132 residues long: Small ribosomal subunit protein eS24 (132 aa).

Positions 92 to 101 (LARHGLYEKK) are enriched in basic and acidic residues. Residues 92–132 (LARHGLYEKKRPTRKQRKERKNRMKKVRGTKKSKVGAAAKK) form a disordered region. Residues 102-132 (RPTRKQRKERKNRMKKVRGTKKSKVGAAAKK) show a composition bias toward basic residues.

Belongs to the eukaryotic ribosomal protein eS24 family.

The chain is Small ribosomal subunit protein eS24 (RpS24) from Spodoptera frugiperda (Fall armyworm).